A 564-amino-acid polypeptide reads, in one-letter code: uncharacterized protein (564 aa).

8 helical membrane passes run 12 to 32 (TYYLWIALFLLLLYVSPLFIL), 97 to 119 (MTAYAISQTVTRVVAFFGMYVLL), 139 to 161 (AFALTPFWPSGMLSTLGYPLALW), 188 to 208 (FVLGFFFFLAGMACFWLYDAI), 213 to 233 (WNLMFLGSIAFMTSIYLFVEY), 277 to 297 (MTVHTVVILPILMVVFAALLF), 306 to 326 (NVYLFLCVLNYGLSLWYAFWF), and 348 to 368 (FHFLRPLVIYVSFALALYLIW).

It localises to the cell membrane. This is an uncharacterized protein from Bacillus subtilis (strain 168).